A 253-amino-acid chain; its full sequence is Adapter protein MecA (253 aa).

Belongs to the MecA family. Homodimer.

In terms of biological role, enables the recognition and targeting of unfolded and aggregated proteins to the ClpC protease or to other proteins involved in proteolysis. The chain is Adapter protein MecA from Streptococcus pyogenes serotype M6 (strain ATCC BAA-946 / MGAS10394).